We begin with the raw amino-acid sequence, 117 residues long: DNA-directed RNA polymerase subunit omega (117 aa).

This sequence belongs to the RNA polymerase subunit omega family. The RNAP catalytic core consists of 2 alpha, 1 beta, 1 beta' and 1 omega subunit. When a sigma factor is associated with the core the holoenzyme is formed, which can initiate transcription.

The catalysed reaction is RNA(n) + a ribonucleoside 5'-triphosphate = RNA(n+1) + diphosphate. In terms of biological role, promotes RNA polymerase assembly. Latches the N- and C-terminal regions of the beta' subunit thereby facilitating its interaction with the beta and alpha subunits. The sequence is that of DNA-directed RNA polymerase subunit omega from Jannaschia sp. (strain CCS1).